Here is a 296-residue protein sequence, read N- to C-terminus: Small ribosomal subunit protein uS2 (296 aa).

The tract at residues 245 to 296 (WEAPAAGFAGATGTGWDGAAGDEWGAAPATTEWAASAAPAAASGEAAKETTW) is disordered. A compositionally biased stretch (low complexity) spans 263 to 289 (AAGDEWGAAPATTEWAASAAPAAASGE).

This sequence belongs to the universal ribosomal protein uS2 family. In terms of assembly, component of the small ribosomal subunit. Mature ribosomes consist of a small (40S) and a large (60S) subunit. The 40S subunit contains about 33 different proteins and 1 molecule of RNA (18S). The 60S subunit contains about 49 different proteins and 3 molecules of RNA (25S, 5.8S and 5S). Interacts with RPS21.

The protein resides in the cytoplasm. Its function is as follows. Required for the assembly and/or stability of the 40S ribosomal subunit. Required for the processing of the 20S rRNA-precursor to mature 18S rRNA in a late step of the maturation of 40S ribosomal subunits. The protein is Small ribosomal subunit protein uS2 of Fusarium vanettenii (strain ATCC MYA-4622 / CBS 123669 / FGSC 9596 / NRRL 45880 / 77-13-4) (Fusarium solani subsp. pisi).